The sequence spans 383 residues: Protein delta homolog 2 (383 aa).

The signal sequence occupies residues 1 to 26 (MPSGCRCLHLVCLLCILGAPVKPARG). EGF-like domains lie at 27 to 58 (NDCS…LHCE), 62 to 89 (RMPG…KFCD), 91 to 129 (DEHI…RDCE), and 131 to 172 (KAGP…ARCE). At 27-306 (NDCSSLCDLA…RQEAGLGEPS (280 aa)) the chain is on the extracellular side. Cystine bridges form between Cys29–Cys40, Cys33–Cys46, Cys48–Cys57, Cys66–Cys71, Cys79–Cys88, Cys95–Cys107, Cys101–Cys117, Cys119–Cys128, Cys135–Cys148, Cys142–Cys160, Cys162–Cys171, Cys178–Cys189, Cys183–Cys198, Cys200–Cys209, Cys216–Cys227, Cys221–Cys236, and Cys238–Cys247. An N-linked (GlcNAc...) asparagine glycan is attached at Asn157. Residues 174–210 (NVDDCLMRPCANGATCLDGINRFSCLCPEGFTGRFCT) enclose the EGF-like 5; calcium-binding domain. Residues 212 to 248 (NLDDCASRPCQRGARCRDRVHDFDCLCPSGYGGKTCE) enclose the EGF-like 6; calcium-binding domain. A helical membrane pass occupies residues 307–327 (LVAVVVFGAVTAALVLSTVLL). Over 328 to 383 (TLRAWRRGFCPPGPCCYPAPHYAPARQDQECQVSMLPTGLPLPPDLPPEPGKTTAL) the chain is Cytoplasmic. Positions 364–383 (PTGLPLPPDLPPEPGKTTAL) are disordered. Residues 367–377 (LPLPPDLPPEP) are compositionally biased toward pro residues.

The protein resides in the membrane. Regulates adipogenesis. The protein is Protein delta homolog 2 (DLK2) of Bos taurus (Bovine).